We begin with the raw amino-acid sequence, 784 residues long: DNA ligase (784 aa).

NAD(+) contacts are provided by residues 35–39, 84–85, and E117; these read DAEYD and SL. The active-site N6-AMP-lysine intermediate is K119. The NAD(+) site is built by R140, E177, K294, and K318. Zn(2+) contacts are provided by C412, C415, C442, and C448. The region spanning 703–784 is the BRCT domain; it reads AEGLPLAGQT…FLALLRQLES (82 aa).

Belongs to the NAD-dependent DNA ligase family. LigA subfamily. It depends on Mg(2+) as a cofactor. Mn(2+) serves as cofactor.

The catalysed reaction is NAD(+) + (deoxyribonucleotide)n-3'-hydroxyl + 5'-phospho-(deoxyribonucleotide)m = (deoxyribonucleotide)n+m + AMP + beta-nicotinamide D-nucleotide.. Functionally, DNA ligase that catalyzes the formation of phosphodiester linkages between 5'-phosphoryl and 3'-hydroxyl groups in double-stranded DNA using NAD as a coenzyme and as the energy source for the reaction. It is essential for DNA replication and repair of damaged DNA. This Azotobacter vinelandii (strain DJ / ATCC BAA-1303) protein is DNA ligase.